A 390-amino-acid chain; its full sequence is Succinate--CoA ligase [ADP-forming] subunit beta (390 aa).

The ATP-grasp domain maps to 9–248; sequence KDILRKFGVT…TSEEDPFEVE (240 aa). Residues Lys-50, 57–59, Glu-103, Met-106, and Glu-111 contribute to the ATP site; that span reads GRG. Mg(2+) is bound by residues Asn-203 and Asp-217. Substrate is bound by residues Asn-268 and 325–327; that span reads GIV.

It belongs to the succinate/malate CoA ligase beta subunit family. Heterotetramer of two alpha and two beta subunits. Mg(2+) serves as cofactor.

It catalyses the reaction succinate + ATP + CoA = succinyl-CoA + ADP + phosphate. The catalysed reaction is GTP + succinate + CoA = succinyl-CoA + GDP + phosphate. Its pathway is carbohydrate metabolism; tricarboxylic acid cycle; succinate from succinyl-CoA (ligase route): step 1/1. Succinyl-CoA synthetase functions in the citric acid cycle (TCA), coupling the hydrolysis of succinyl-CoA to the synthesis of either ATP or GTP and thus represents the only step of substrate-level phosphorylation in the TCA. The beta subunit provides nucleotide specificity of the enzyme and binds the substrate succinate, while the binding sites for coenzyme A and phosphate are found in the alpha subunit. The chain is Succinate--CoA ligase [ADP-forming] subunit beta from Chlorobium chlorochromatii (strain CaD3).